We begin with the raw amino-acid sequence, 344 residues long: Selenide, water dikinase (344 aa).

Residue C16 is part of the active site. Residues K19 and 47 to 49 (SRD) contribute to the ATP site. Position 50 (D50) interacts with Mg(2+). ATP is bound by residues D67, D90, and 138-140 (GHS). D90 lines the Mg(2+) pocket. D226 provides a ligand contact to Mg(2+).

Belongs to the selenophosphate synthase 1 family. Class I subfamily. Homodimer. Mg(2+) serves as cofactor.

It carries out the reaction hydrogenselenide + ATP + H2O = selenophosphate + AMP + phosphate + 2 H(+). Its function is as follows. Synthesizes selenophosphate from selenide and ATP. This Bordetella bronchiseptica (strain ATCC BAA-588 / NCTC 13252 / RB50) (Alcaligenes bronchisepticus) protein is Selenide, water dikinase.